We begin with the raw amino-acid sequence, 391 residues long: Formate-dependent phosphoribosylglycinamide formyltransferase (391 aa).

N(1)-(5-phospho-beta-D-ribosyl)glycinamide contacts are provided by residues 20-21 and E80; that span reads EL. ATP is bound by residues R112, K153, 158–163, 193–196, and E201; these read SSGKGQ and EGFV. Residues 117–306 form the ATP-grasp domain; sequence RLAAEELGLP…EFALHVRAFT (190 aa). Mg(2+)-binding residues include E265 and E277. Residues D284, K354, and 361 to 362 contribute to the N(1)-(5-phospho-beta-D-ribosyl)glycinamide site; that span reads RR.

The protein belongs to the PurK/PurT family. In terms of assembly, homodimer.

It catalyses the reaction N(1)-(5-phospho-beta-D-ribosyl)glycinamide + formate + ATP = N(2)-formyl-N(1)-(5-phospho-beta-D-ribosyl)glycinamide + ADP + phosphate + H(+). It participates in purine metabolism; IMP biosynthesis via de novo pathway; N(2)-formyl-N(1)-(5-phospho-D-ribosyl)glycinamide from N(1)-(5-phospho-D-ribosyl)glycinamide (formate route): step 1/1. In terms of biological role, involved in the de novo purine biosynthesis. Catalyzes the transfer of formate to 5-phospho-ribosyl-glycinamide (GAR), producing 5-phospho-ribosyl-N-formylglycinamide (FGAR). Formate is provided by PurU via hydrolysis of 10-formyl-tetrahydrofolate. The sequence is that of Formate-dependent phosphoribosylglycinamide formyltransferase from Vibrio cholerae serotype O1 (strain ATCC 39315 / El Tor Inaba N16961).